The sequence spans 499 residues: Maturase K (499 aa).

It belongs to the intron maturase 2 family. MatK subfamily.

It is found in the plastid. Its subcellular location is the chloroplast. Its function is as follows. Usually encoded in the trnK tRNA gene intron. Probably assists in splicing its own and other chloroplast group II introns. In Batis maritima (Maritime saltwort), this protein is Maturase K.